A 241-amino-acid polypeptide reads, in one-letter code: MTGRLQLHKLVVLGDGGVGKTALTIQLCLQHFVETYDPTIEDSYRKQVVIDNQACMLEVLDTAGQEEYTALRDQWIRDGEGFVLVYSISSRSSFSRIKRFHHQIQRVKESCASSPSYPGSPIATVTTQAPVPIMLVGNKSDRVTEREVSTQEGHALARELGCEFVEASAKNCINVEKAFYDVVRILRRQRQQASRPSLPGNSRTKTGGMGKSESFYQSDGKRGSRKDGEKHRSKPIKCVIL.

Residues 17-22, 33-39, 63-64, 138-141, and 168-170 contribute to the GTP site; these read GVGKTA, VETYDPT, AG, NKSD, and SAK. An Effector region motif is present at residues 36–44; that stretch reads YDPTIEDSY. A disordered region spans residues 190–241; sequence RQQASRPSLPGNSRTKTGGMGKSESFYQSDGKRGSRKDGEKHRSKPIKCVIL. Positions 191–205 are enriched in polar residues; the sequence is QQASRPSLPGNSRTK. A compositionally biased stretch (basic and acidic residues) spans 219–230; it reads DGKRGSRKDGEK. Residue C238 is modified to Cysteine methyl ester. Residue C238 is the site of S-farnesyl cysteine attachment. Residues 239-241 constitute a propeptide, removed in mature form; sequence VIL.

The protein belongs to the small GTPase superfamily. Ras family. In terms of assembly, interacts with farnesyltransferase beta subunit RAM1.

The protein localises to the cell membrane. Alternates between an inactive form bound to GDP and an active form bound to GTP. Activated by a guanine nucleotide-exchange factor (GEF) and inactivated by a GTPase-activating protein (GAP). Its function is as follows. Modulates the activity of the adenylate cyclase catalytic subunit and therefore affects the biosynthesis of cyclic-AMP. Plays a role in both surface attachment and surface recognition of appressoria, a highly specialized infection structure for plant penetration. Regulates appressorium formation by coordinated regulation of cAMP signaling and Pmk1 MAPK pathways. This chain is Ras-like protein 1, found in Pyricularia oryzae (strain 70-15 / ATCC MYA-4617 / FGSC 8958) (Rice blast fungus).